The primary structure comprises 475 residues: Aspartyl/glutamyl-tRNA(Asn/Gln) amidotransferase subunit B (475 aa).

This sequence belongs to the GatB/GatE family. GatB subfamily. Heterotrimer of A, B and C subunits.

The catalysed reaction is L-glutamyl-tRNA(Gln) + L-glutamine + ATP + H2O = L-glutaminyl-tRNA(Gln) + L-glutamate + ADP + phosphate + H(+). It carries out the reaction L-aspartyl-tRNA(Asn) + L-glutamine + ATP + H2O = L-asparaginyl-tRNA(Asn) + L-glutamate + ADP + phosphate + 2 H(+). In terms of biological role, allows the formation of correctly charged Asn-tRNA(Asn) or Gln-tRNA(Gln) through the transamidation of misacylated Asp-tRNA(Asn) or Glu-tRNA(Gln) in organisms which lack either or both of asparaginyl-tRNA or glutaminyl-tRNA synthetases. The reaction takes place in the presence of glutamine and ATP through an activated phospho-Asp-tRNA(Asn) or phospho-Glu-tRNA(Gln). This chain is Aspartyl/glutamyl-tRNA(Asn/Gln) amidotransferase subunit B, found in Lysinibacillus sphaericus (strain C3-41).